The chain runs to 162 residues: Ribonuclease P protein component (162 aa).

Residues 1-67 (MDEKDLAAQP…GGKLVSLKGD (67 aa)) form a disordered region. Positions 21–31 (GPHEDPRRQEG) are enriched in basic and acidic residues.

It belongs to the RnpA family. As to quaternary structure, consists of a catalytic RNA component (M1 or rnpB) and a protein subunit.

The enzyme catalyses Endonucleolytic cleavage of RNA, removing 5'-extranucleotides from tRNA precursor.. RNaseP catalyzes the removal of the 5'-leader sequence from pre-tRNA to produce the mature 5'-terminus. It can also cleave other RNA substrates such as 4.5S RNA. The protein component plays an auxiliary but essential role in vivo by binding to the 5'-leader sequence and broadening the substrate specificity of the ribozyme. The chain is Ribonuclease P protein component from Thermus brockianus.